The primary structure comprises 204 residues: Glycerol-3-phosphate acyltransferase (204 aa).

Helical transmembrane passes span 8-28 (MLVF…CYIF), 53-73 (VPAI…VVLA), 81-101 (FITA…IFFG), 116-136 (FGFS…VAVI), and 155-175 (VIFT…IIIL).

It belongs to the PlsY family. In terms of assembly, probably interacts with PlsX.

It localises to the cell inner membrane. The enzyme catalyses an acyl phosphate + sn-glycerol 3-phosphate = a 1-acyl-sn-glycero-3-phosphate + phosphate. The protein operates within lipid metabolism; phospholipid metabolism. In terms of biological role, catalyzes the transfer of an acyl group from acyl-phosphate (acyl-PO(4)) to glycerol-3-phosphate (G3P) to form lysophosphatidic acid (LPA). This enzyme utilizes acyl-phosphate as fatty acyl donor, but not acyl-CoA or acyl-ACP. The polypeptide is Glycerol-3-phosphate acyltransferase (Francisella philomiragia subsp. philomiragia (strain ATCC 25017 / CCUG 19701 / FSC 153 / O#319-036)).